A 1061-amino-acid polypeptide reads, in one-letter code: Error-prone DNA polymerase (1061 aa).

This sequence belongs to the DNA polymerase type-C family. DnaE2 subfamily.

Its subcellular location is the cytoplasm. It carries out the reaction DNA(n) + a 2'-deoxyribonucleoside 5'-triphosphate = DNA(n+1) + diphosphate. In terms of biological role, DNA polymerase involved in damage-induced mutagenesis and translesion synthesis (TLS). It is not the major replicative DNA polymerase. The chain is Error-prone DNA polymerase from Bdellovibrio bacteriovorus (strain ATCC 15356 / DSM 50701 / NCIMB 9529 / HD100).